The chain runs to 206 residues: Thymidylate kinase (206 aa).

10–17 (GIDGAGKS) is an ATP binding site.

This sequence belongs to the thymidylate kinase family.

It carries out the reaction dTMP + ATP = dTDP + ADP. Phosphorylation of dTMP to form dTDP in both de novo and salvage pathways of dTTP synthesis. In Neisseria meningitidis serogroup A / serotype 4A (strain DSM 15465 / Z2491), this protein is Thymidylate kinase (tmk).